We begin with the raw amino-acid sequence, 183 residues long: D-glycero-alpha-D-manno-heptose-1,7-bisphosphate 7-phosphatase (183 aa).

Positions 93, 95, 108, and 110 each coordinate Zn(2+).

The protein belongs to the GmhB family.

The protein resides in the cytoplasm. The enzyme catalyses D-glycero-alpha-D-manno-heptose 1,7-bisphosphate + H2O = D-glycero-alpha-D-manno-heptose 1-phosphate + phosphate. Its pathway is nucleotide-sugar biosynthesis; GDP-D-glycero-alpha-D-manno-heptose biosynthesis; GDP-D-glycero-alpha-D-manno-heptose from D-glycero-alpha-D-manno-heptose 7-phosphate: step 2/3. Functionally, converts the D-glycero-alpha-D-manno-heptose 1,7-bisphosphate intermediate into D-glycero-alpha-D-manno-heptose 1-phosphate by removing the phosphate group at the C-7 position. The chain is D-glycero-alpha-D-manno-heptose-1,7-bisphosphate 7-phosphatase (gmhB2) from Photorhabdus laumondii subsp. laumondii (strain DSM 15139 / CIP 105565 / TT01) (Photorhabdus luminescens subsp. laumondii).